Consider the following 633-residue polypeptide: Probable potassium transport system protein Kup 2 (633 aa).

The next 12 helical transmembrane spans lie at 18 to 38 (FVGL…TSPL), 61 to 81 (LISL…VLFL), 107 to 127 (VPVL…DAMI), 143 to 163 (ITPA…IVLF), 176 to 196 (FFGP…VIHI), 211 to 231 (ALSF…AVFL), 255 to 275 (WFVL…ALVL), 293 to 313 (ALLP…QAVI), 345 to 365 (IYVP…IFSF), 371 to 391 (LATA…MLAF), 402 to 422 (FMLA…FLAA), and 429 to 449 (DGGW…WTWT).

This sequence belongs to the HAK/KUP transporter (TC 2.A.72) family.

The protein localises to the cell inner membrane. The catalysed reaction is K(+)(in) + H(+)(in) = K(+)(out) + H(+)(out). Transport of potassium into the cell. Likely operates as a K(+):H(+) symporter. The chain is Probable potassium transport system protein Kup 2 from Rhizobium etli (strain ATCC 51251 / DSM 11541 / JCM 21823 / NBRC 15573 / CFN 42).